The chain runs to 77 residues: NAD(P)H-quinone oxidoreductase subunit L (77 aa).

The next 2 membrane-spanning stretches (helical) occupy residues 12–32 (LIAY…LLFY) and 47–67 (LGIY…SPFL).

It belongs to the complex I NdhL subunit family. In terms of assembly, NDH-1 can be composed of about 15 different subunits; different subcomplexes with different compositions have been identified which probably have different functions.

It localises to the cellular thylakoid membrane. The enzyme catalyses a plastoquinone + NADH + (n+1) H(+)(in) = a plastoquinol + NAD(+) + n H(+)(out). The catalysed reaction is a plastoquinone + NADPH + (n+1) H(+)(in) = a plastoquinol + NADP(+) + n H(+)(out). In terms of biological role, NDH-1 shuttles electrons from an unknown electron donor, via FMN and iron-sulfur (Fe-S) centers, to quinones in the respiratory and/or the photosynthetic chain. The immediate electron acceptor for the enzyme in this species is believed to be plastoquinone. Couples the redox reaction to proton translocation, and thus conserves the redox energy in a proton gradient. Cyanobacterial NDH-1 also plays a role in inorganic carbon-concentration. This Prochlorococcus marinus (strain AS9601) protein is NAD(P)H-quinone oxidoreductase subunit L.